A 371-amino-acid chain; its full sequence is Histidinol-phosphate aminotransferase (371 aa).

Position 228 is an N6-(pyridoxal phosphate)lysine (Lys228).

It belongs to the class-II pyridoxal-phosphate-dependent aminotransferase family. Histidinol-phosphate aminotransferase subfamily. Pyridoxal 5'-phosphate serves as cofactor.

It catalyses the reaction L-histidinol phosphate + 2-oxoglutarate = 3-(imidazol-4-yl)-2-oxopropyl phosphate + L-glutamate. It functions in the pathway amino-acid biosynthesis; L-histidine biosynthesis; L-histidine from 5-phospho-alpha-D-ribose 1-diphosphate: step 7/9. In Methanococcus aeolicus (strain ATCC BAA-1280 / DSM 17508 / OCM 812 / Nankai-3), this protein is Histidinol-phosphate aminotransferase.